The following is a 582-amino-acid chain: Phosphoribosylaminoimidazole carboxylase (582 aa).

Residues 114 to 305 (KKYLAERGVA…QFENHLRAIL (192 aa)) form the ATP-grasp domain. Residue 143-200 (AGRLGLPLMLKAKTLAYDGRGNSPLKSASSEDIQASLKFLGDRPLYAEGWAPFVKEVA) coordinates ATP.

The protein in the C-terminal section; belongs to the AIR carboxylase family. Class I subfamily.

The enzyme catalyses 5-amino-1-(5-phospho-D-ribosyl)imidazole-4-carboxylate + H(+) = 5-amino-1-(5-phospho-beta-D-ribosyl)imidazole + CO2. Its pathway is purine metabolism; IMP biosynthesis via de novo pathway; 5-amino-1-(5-phospho-D-ribosyl)imidazole-4-carboxylate from 5-amino-1-(5-phospho-D-ribosyl)imidazole (carboxylase route): step 1/1. This is Phosphoribosylaminoimidazole carboxylase (ADE2) from Cryptococcus neoformans var. neoformans serotype D (strain B-3501A) (Filobasidiella neoformans).